The following is a 962-amino-acid chain: Glycine dehydrogenase (decarboxylating) (962 aa).

Position 709 is an N6-(pyridoxal phosphate)lysine (lysine 709).

The protein belongs to the GcvP family. In terms of assembly, the glycine cleavage system is composed of four proteins: P, T, L and H. The cofactor is pyridoxal 5'-phosphate.

It catalyses the reaction N(6)-[(R)-lipoyl]-L-lysyl-[glycine-cleavage complex H protein] + glycine + H(+) = N(6)-[(R)-S(8)-aminomethyldihydrolipoyl]-L-lysyl-[glycine-cleavage complex H protein] + CO2. Functionally, the glycine cleavage system catalyzes the degradation of glycine. The P protein binds the alpha-amino group of glycine through its pyridoxal phosphate cofactor; CO(2) is released and the remaining methylamine moiety is then transferred to the lipoamide cofactor of the H protein. This is Glycine dehydrogenase (decarboxylating) from Shewanella sp. (strain ANA-3).